Here is a 555-residue protein sequence, read N- to C-terminus: Oxamate carbamoyltransferase subunit AllF (555 aa).

This sequence belongs to the AllF family. In terms of assembly, the OXTCase is composed of 3 subunits, AllF, AllG and AllH. Requires Mg(2+) as cofactor.

It catalyses the reaction oxamate + carbamoyl phosphate = N-carbamoyl-2-oxoglycine + phosphate. It participates in nitrogen metabolism; (S)-allantoin degradation. In terms of biological role, component of a carbamoyltransferase involved in the anaerobic nitrogen utilization via the assimilation of allantoin. Catalyzes the conversion of oxalurate (N-carbamoyl-2-oxoglycine) to oxamate and carbamoyl phosphate. This Escherichia coli (strain K12) protein is Oxamate carbamoyltransferase subunit AllF.